A 192-amino-acid polypeptide reads, in one-letter code: Thymidine kinase (192 aa).

ATP-binding positions include 9–16 (STMNAGKS) and 87–90 (DEAQ). E88 acts as the Proton acceptor in catalysis. The Zn(2+) site is built by C145, C147, C182, and H185.

The protein belongs to the thymidine kinase family. Homotetramer.

It is found in the cytoplasm. It carries out the reaction thymidine + ATP = dTMP + ADP + H(+). The polypeptide is Thymidine kinase (Pasteurella multocida (strain Pm70)).